Reading from the N-terminus, the 644-residue chain is Chaperone protein DnaK (644 aa).

Thr-199 carries the phosphothreonine; by autocatalysis modification. Residues 603–644 form a disordered region; sequence YAKKSSEGQAAQGQTQSQESTKPAEEGVVDAEFEEVKEEDKK. Positions 609–623 are enriched in polar residues; that stretch reads EGQAAQGQTQSQEST. A compositionally biased stretch (acidic residues) spans 629–644; sequence GVVDAEFEEVKEEDKK.

This sequence belongs to the heat shock protein 70 family.

Its function is as follows. Acts as a chaperone. In Legionella pneumophila (strain Corby), this protein is Chaperone protein DnaK.